The chain runs to 139 residues: Single-stranded DNA-binding protein 2 (139 aa).

The 104-residue stretch at 1-104 folds into the SSB domain; that stretch reads MLNRTVLVGR…VVADSVQFLE (104 aa). Residues 103–139 form a disordered region; the sequence is LEPKNNNKQNNQQHNGQTQTGNNPFDNTEEDFSDLPF. Low complexity predominate over residues 106 to 125; sequence KNNNKQNNQQHNGQTQTGNN. A compositionally biased stretch (acidic residues) spans 129–139; that stretch reads NTEEDFSDLPF.

In terms of assembly, homotetramer.

This is Single-stranded DNA-binding protein 2 (ssb-p) from Staphylococcus aureus (strain COL).